Reading from the N-terminus, the 279-residue chain is Non-structural maintenance of chromosomes element 3 homolog (279 aa).

The tract at residues Met-1–Gly-52 is disordered. Residues Ser-30–Ala-48 show a composition bias toward low complexity. Residue Ser-38 is modified to Phosphoserine. Residues Gly-52–Ser-279 are interaction with NSMCE1. The MAGE domain occupies Leu-59–Ala-259.

As to quaternary structure, component of the SMC5-SMC6 complex which consists at least of SMC5, SMC6, NSMCE2, NSMCE1, NSMCE4A or EID3 and NSMCE3. NSMCE1, NSMCE4A or EID3 and NSMCE3 probably form a subcomplex that bridges the head domains of the SMC5:SMC6 heterodimer. Interacts with PJA1. Interacts with E2F1 (via C-terminus). Interacts with NGFR (via C-terminus). Interacts with NSMCE1. Interacts with NSMCE4. Interacts with SMC6. Interacts with EID3. As to expression, ubiquitous.

It is found in the cytoplasm. The protein localises to the nucleus. The protein resides in the chromosome. Its subcellular location is the telomere. In terms of biological role, component of the SMC5-SMC6 complex, a complex involved in repair of DNA double-strand breaks by homologous recombination. The complex may promote sister chromatid homologous recombination by recruiting the SMC1-SMC3 cohesin complex to double-strand breaks. The complex is required for telomere maintenance via recombination in ALT (alternative lengthening of telomeres) cell lines and mediates sumoylation of shelterin complex (telosome) components which is proposed to lead to shelterin complex disassembly in ALT-associated PML bodies (APBs). In vitro enhances ubiquitin ligase activity of NSMCE1. Proposed to act through recruitment and/or stabilization of the Ubl-conjugating enzyme (E2) at the E3:substrate complex. May be a growth suppressor that facilitates the entry of the cell into cell cycle arrest. In Mus musculus (Mouse), this protein is Non-structural maintenance of chromosomes element 3 homolog (Nsmce3).